Here is a 243-residue protein sequence, read N- to C-terminus: Probable heat shock transcription factor (243 aa).

A DNA-binding region spans residues 9-102; it reads INKFIRRLYK…GDNLLPCIQR (94 aa). An involved in trimerization region spans residues 121 to 164; it reads QLQDLLQYLNNQNFKLEGEIKSLKDRVDQQDCTINGLVQLLTRI.

This sequence belongs to the HSF family. Homotrimer. Homotrimerization increases the affinity of HSF1 to DNA.

Its subcellular location is the nucleus. DNA-binding transcription factor that specifically binds heat shock promoter elements (HSE) and activates transcription. In Vairimorpha ceranae (strain BRL01) (Microsporidian parasite), this protein is Probable heat shock transcription factor.